The primary structure comprises 729 residues: Glycerophosphodiester phosphodiesterase GDPDL5 (729 aa).

Residues 1-22 form the signal peptide; it reads MACPRVIFLILITFFILQTAFS. GP-PDE domains follow at residues 33 to 320 and 337 to 645; these read PAVI…YRAI and ITII…ARYR. N-linked (GlcNAc...) asparagine glycosylation is found at asparagine 88, asparagine 162, asparagine 218, asparagine 227, asparagine 285, asparagine 302, asparagine 390, asparagine 401, and asparagine 507. The chain crosses the membrane as a helical span at residues 709–729; it reads AIEVPFAFIAMAILVCFFISV.

Belongs to the glycerophosphoryl diester phosphodiesterase family. In terms of tissue distribution, expressed in stems, flowers and siliques.

The protein localises to the membrane. The enzyme catalyses a sn-glycero-3-phosphodiester + H2O = an alcohol + sn-glycerol 3-phosphate + H(+). This chain is Glycerophosphodiester phosphodiesterase GDPDL5, found in Arabidopsis thaliana (Mouse-ear cress).